We begin with the raw amino-acid sequence, 174 residues long: V-type proton ATPase catalytic subunit A (174 aa).

It belongs to the ATPase alpha/beta chains family. In terms of assembly, V-ATPase is a heteromultimeric enzyme made up of two complexes: the ATP-hydrolytic V1 complex and the proton translocation V0 complex. The V1 complex consists of three catalytic AB heterodimers that form a heterohexamer, three peripheral stalks each consisting of EG heterodimers, one central rotor including subunits D and F, and the regulatory subunits C and H. The proton translocation complex V0 consists of the proton transport subunit a, a ring of proteolipid subunits c9c'', rotary subunit d, subunits e and f, and the accessory subunits ATP6AP1/Ac45 and ATP6AP2/PRR. Interacts with the V0 complex V-ATPase subunit a4 ATP6V0A4. Interacts with WFS1. Interacts with alpha-crystallin B chain/CRYAB and with MTOR, forming a ternary complex.

Its subcellular location is the cytoplasm. The protein resides in the cytosol. It is found in the cytoplasmic vesicle. The protein localises to the secretory vesicle. It localises to the clathrin-coated vesicle membrane. Its subcellular location is the lysosome. It catalyses the reaction ATP + H2O + 4 H(+)(in) = ADP + phosphate + 5 H(+)(out). ATP hydrolysis occurs at the interface between the nucleotide-binding domains of subunits A and B. ATP hydrolysis triggers a conformational change in the subunits D and F, which induces a shift of subunit d. The c-ring is subsequently rotated and results in a continuous proton translocation across the membrane. Catalytic subunit of the V1 complex of vacuolar(H+)-ATPase (V-ATPase), a multisubunit enzyme composed of a peripheral complex (V1) that hydrolyzes ATP and a membrane integral complex (V0) that translocates protons. V-ATPase is responsible for acidifying and maintaining the pH of intracellular compartments and in some cell types, is targeted to the plasma membrane, where it is responsible for acidifying the extracellular environment. In aerobic conditions, involved in intracellular iron homeostasis, thus triggering the activity of Fe(2+) prolyl hydroxylase (PHD) enzymes, and leading to HIF1A hydroxylation and subsequent proteasomal degradation. May play a role in neurite development and synaptic connectivity. In Mesocricetus auratus (Golden hamster), this protein is V-type proton ATPase catalytic subunit A.